A 427-amino-acid chain; its full sequence is D-inositol 3-phosphate glycosyltransferase 2 (427 aa).

His14 serves as a coordination point for 1D-myo-inositol 3-phosphate. UDP-N-acetyl-alpha-D-glucosamine is bound by residues 20–21 (QP) and Gly28. Residues 25–30 (DAGGMN), Lys83, Tyr116, Thr140, and Arg160 each bind 1D-myo-inositol 3-phosphate. Residues Arg234, Lys239, and Val300 each coordinate UDP-N-acetyl-alpha-D-glucosamine. Mg(2+) is bound by residues Tyr309, Arg310, and Ala312. UDP-N-acetyl-alpha-D-glucosamine-binding residues include Glu322 and Glu330. Thr336 is a binding site for Mg(2+).

Belongs to the glycosyltransferase group 1 family. MshA subfamily. In terms of assembly, homodimer.

The catalysed reaction is 1D-myo-inositol 3-phosphate + UDP-N-acetyl-alpha-D-glucosamine = 1D-myo-inositol 2-acetamido-2-deoxy-alpha-D-glucopyranoside 3-phosphate + UDP + H(+). Catalyzes the transfer of a N-acetyl-glucosamine moiety to 1D-myo-inositol 3-phosphate to produce 1D-myo-inositol 2-acetamido-2-deoxy-glucopyranoside 3-phosphate in the mycothiol biosynthesis pathway. The polypeptide is D-inositol 3-phosphate glycosyltransferase 2 (Catenulispora acidiphila (strain DSM 44928 / JCM 14897 / NBRC 102108 / NRRL B-24433 / ID139908)).